The primary structure comprises 151 residues: Transcription elongation factor GreA (151 aa).

Residues 41–62 (AEYHAAREKQSFIEGRIKELEA) adopt a coiled-coil conformation.

It belongs to the GreA/GreB family.

Necessary for efficient RNA polymerase transcription elongation past template-encoded arresting sites. The arresting sites in DNA have the property of trapping a certain fraction of elongating RNA polymerases that pass through, resulting in locked ternary complexes. Cleavage of the nascent transcript by cleavage factors such as GreA or GreB allows the resumption of elongation from the new 3'terminus. GreA releases sequences of 2 to 3 nucleotides. This Cereibacter sphaeroides (strain ATCC 17023 / DSM 158 / JCM 6121 / CCUG 31486 / LMG 2827 / NBRC 12203 / NCIMB 8253 / ATH 2.4.1.) (Rhodobacter sphaeroides) protein is Transcription elongation factor GreA.